Here is a 155-residue protein sequence, read N- to C-terminus: Transcription antitermination protein NusB (155 aa).

The protein belongs to the NusB family.

Its function is as follows. Involved in transcription antitermination. Required for transcription of ribosomal RNA (rRNA) genes. Binds specifically to the boxA antiterminator sequence of the ribosomal RNA (rrn) operons. The polypeptide is Transcription antitermination protein NusB (Azoarcus sp. (strain BH72)).